A 230-amino-acid chain; its full sequence is uncharacterized protein (230 aa).

Catalysis depends on charge relay system residues serine 124 and histidine 158.

This sequence belongs to the peptidase S51 family.

This is an uncharacterized protein from Bacillus subtilis (strain 168).